A 44-amino-acid chain; its full sequence is Cytochrome b559 subunit beta (44 aa).

Residues 19-35 (WVSIHALAVPTIFFLGS) traverse the membrane as a helical segment. His23 is a binding site for heme.

It belongs to the PsbE/PsbF family. In terms of assembly, heterodimer of an alpha subunit and a beta subunit. PSII is composed of 1 copy each of membrane proteins PsbA, PsbB, PsbC, PsbD, PsbE, PsbF, PsbH, PsbI, PsbJ, PsbK, PsbL, PsbM, PsbT, PsbX, PsbY, PsbZ, Psb30/Ycf12, at least 3 peripheral proteins of the oxygen-evolving complex and a large number of cofactors. It forms dimeric complexes. The cofactor is heme b.

Its subcellular location is the plastid. It localises to the chloroplast thylakoid membrane. This b-type cytochrome is tightly associated with the reaction center of photosystem II (PSII). PSII is a light-driven water:plastoquinone oxidoreductase that uses light energy to abstract electrons from H(2)O, generating O(2) and a proton gradient subsequently used for ATP formation. It consists of a core antenna complex that captures photons, and an electron transfer chain that converts photonic excitation into a charge separation. The sequence is that of Cytochrome b559 subunit beta from Chlamydomonas moewusii (Chlamydomonas eugametos).